A 777-amino-acid polypeptide reads, in one-letter code: Shutoff protein (777 aa).

2 disordered regions span residues 1 to 55 (MEED…SVPV) and 261 to 283 (PLDS…DDDL). Residues 9-20 (QPDSETLTSPTS) show a composition bias toward polar residues. Positions 250–314 (VMDHLLIKRV…VILVTVELEC (65 aa)) are binding to host EIF4G. Residues 317–435 (RFFANPQTLR…ELWTAFSERT (119 aa)) form the RRM domain. Phosphotyrosine; by host is present on residues tyrosine 334 and tyrosine 649. Residues 652–777 (PQTGEELNTP…AAARLVESQP (126 aa)) form a disordered region. Residues 656–665 (EELNTPSPSA) show a composition bias toward polar residues. A compositionally biased stretch (gly residues) spans 728–738 (GAGGQTPQGRG). The segment covering 753–763 (TRSEPASDGES) has biased composition (basic and acidic residues).

It belongs to the adenoviridae shutoff protein family. Monomer. Interacts with hexon protein; this interaction allows chaperoning and trimerization of hexon proteins. Interacts (via N-terminus) with host initiation factor EIF4G (via C-terminus). Interacts (via RRM domain) with viral mRNAs that contain the tripartite leader; this interaction allows ribosome shunting and expression of viral late mRNAs. Post-translationally, might be cleaved by the viral protease. Phosphorylated. Tyrosine phosphorylation enhances preferential binding to tripartite leader mRNAs and allows ribosome shunting. In terms of processing, methylated. Asymmetric dimethylation by host PRMT1 of the Arg/Gly-rich region may regulate shutoff protein binding to hexon and promote the capsid assembly in the nucleus.

It is found in the host cytoplasm. Functionally, protein that inhibits host translation while promoting late viral translation by ribosome shunting. Blocks host cap-dependent translation by binding to eIF4G, displacing MKNK1 from cap initiation complexes and preventing EIF4E phosphorylation. Binds to the tripartite leader sequence of viral late mRNAs and recruits host eIF4G, PABPC1/poly-A binding protein and 40S ribosomes subunits on viral mRNAs, allowing ribosome shunting and efficient translation of late viral mRNAs even though conventional translation via ribosome scanning from the cap has been shut off in the host cell. During assembly, acts as a chaperone protein that helps hexon proteins assembly into trimers. The polypeptide is Shutoff protein (Homo sapiens (Human)).